Reading from the N-terminus, the 453-residue chain is Ribulose bisphosphate carboxylase large chain (453 aa).

A propeptide spanning residues 1–2 is cleaved from the precursor; the sequence is MS. Proline 3 bears the N-acetylproline mark. Lysine 14 bears the N6,N6,N6-trimethyllysine mark. 2 residues coordinate substrate: asparagine 123 and threonine 173. Residue lysine 175 is the Proton acceptor of the active site. Lysine 177 serves as a coordination point for substrate. Residues lysine 201, aspartate 203, and glutamate 204 each contribute to the Mg(2+) site. At lysine 201 the chain carries N6-carboxylysine. Histidine 294 acts as the Proton acceptor in catalysis. 3 residues coordinate substrate: arginine 295, histidine 327, and serine 379.

The protein belongs to the RuBisCO large chain family. Type I subfamily. In terms of assembly, heterohexadecamer of 8 large chains and 8 small chains; disulfide-linked. The disulfide link is formed within the large subunit homodimers. Requires Mg(2+) as cofactor. Post-translationally, the disulfide bond which can form in the large chain dimeric partners within the hexadecamer appears to be associated with oxidative stress and protein turnover.

It is found in the plastid. It localises to the chloroplast. It catalyses the reaction 2 (2R)-3-phosphoglycerate + 2 H(+) = D-ribulose 1,5-bisphosphate + CO2 + H2O. The enzyme catalyses D-ribulose 1,5-bisphosphate + O2 = 2-phosphoglycolate + (2R)-3-phosphoglycerate + 2 H(+). RuBisCO catalyzes two reactions: the carboxylation of D-ribulose 1,5-bisphosphate, the primary event in carbon dioxide fixation, as well as the oxidative fragmentation of the pentose substrate in the photorespiration process. Both reactions occur simultaneously and in competition at the same active site. In Asperula laevigata (Smooth woodruff), this protein is Ribulose bisphosphate carboxylase large chain.